A 388-amino-acid chain; its full sequence is Deoxyguanosinetriphosphate triphosphohydrolase-like protein (388 aa).

The segment at 24 to 44 (HSAQTRGRVHAEPPSTSRTEF) is disordered. Positions 78-209 (RLTHSLEVAQ…ANLADEVAYN (132 aa)) constitute an HD domain.

It belongs to the dGTPase family. Type 2 subfamily.

The chain is Deoxyguanosinetriphosphate triphosphohydrolase-like protein from Ralstonia pickettii (strain 12J).